Consider the following 266-residue polypeptide: ATP synthase subunit a (266 aa).

7 helical membrane passes run 41 to 61 (IDTLIMSFGLGALFCYVFWLA), 98 to 118 (VIAPLALTIFCWVFLSNLMDL), 119 to 139 (VPIDMVPSIMMAVGVDYWKIL), 152 to 172 (LSVLALIIIYGVMGQGVGGWL), 178 to 198 (HPLGPWLAPANLILNIVEFIA), 216 to 236 (LVFILISLLPWWIQWALGTPW), and 237 to 257 (AIFHILVVPLQAFIFMMLTVV).

It belongs to the ATPase A chain family. As to quaternary structure, F-type ATPases have 2 components, CF(1) - the catalytic core - and CF(0) - the membrane proton channel. CF(1) has five subunits: alpha(3), beta(3), gamma(1), delta(1), epsilon(1). CF(0) has three main subunits: a(1), b(2) and c(9-12). The alpha and beta chains form an alternating ring which encloses part of the gamma chain. CF(1) is attached to CF(0) by a central stalk formed by the gamma and epsilon chains, while a peripheral stalk is formed by the delta and b chains.

The protein resides in the cell inner membrane. Key component of the proton channel; it plays a direct role in the translocation of protons across the membrane. This is ATP synthase subunit a from Halorhodospira halophila (strain DSM 244 / SL1) (Ectothiorhodospira halophila (strain DSM 244 / SL1)).